We begin with the raw amino-acid sequence, 391 residues long: Phosphoglycerate kinase (391 aa).

Substrate is bound by residues 21–23, Arg-36, 59–62, Arg-113, and Arg-146; these read DMN and HLGR. Residues Lys-197, Glu-319, and 345-348 contribute to the ATP site; that span reads GGDT.

This sequence belongs to the phosphoglycerate kinase family. Monomer.

It localises to the cytoplasm. It carries out the reaction (2R)-3-phosphoglycerate + ATP = (2R)-3-phospho-glyceroyl phosphate + ADP. Its pathway is carbohydrate degradation; glycolysis; pyruvate from D-glyceraldehyde 3-phosphate: step 2/5. The sequence is that of Phosphoglycerate kinase from Chromobacterium violaceum (strain ATCC 12472 / DSM 30191 / JCM 1249 / CCUG 213 / NBRC 12614 / NCIMB 9131 / NCTC 9757 / MK).